The chain runs to 225 residues: Uracil-DNA glycosylase (225 aa).

D65 functions as the Proton acceptor in the catalytic mechanism.

This sequence belongs to the uracil-DNA glycosylase (UDG) superfamily. UNG family.

It localises to the cytoplasm. The enzyme catalyses Hydrolyzes single-stranded DNA or mismatched double-stranded DNA and polynucleotides, releasing free uracil.. Its function is as follows. Excises uracil residues from the DNA which can arise as a result of misincorporation of dUMP residues by DNA polymerase or due to deamination of cytosine. This chain is Uracil-DNA glycosylase, found in Clostridium beijerinckii (strain ATCC 51743 / NCIMB 8052) (Clostridium acetobutylicum).